Reading from the N-terminus, the 652-residue chain is Aspartate--tRNA ligase, mitochondrial (652 aa).

The N-terminal 46 residues, Met-1 to Phe-46, are a transit peptide targeting the mitochondrion. Position 218 is a phosphothreonine (Thr-218). Residue Ser-241 is modified to Phosphoserine. Residues Gln-243–Lys-246 form an aspartate region. Position 265 (Arg-265) interacts with L-aspartate. Residues Arg-265–Glu-267 and Glu-534 contribute to the ATP site. Arg-541 serves as a coordination point for L-aspartate. Position 583 to 586 (Gly-583 to Arg-586) interacts with ATP.

The protein belongs to the class-II aminoacyl-tRNA synthetase family. Type 1 subfamily. As to quaternary structure, homodimer.

The protein localises to the mitochondrion matrix. It is found in the mitochondrion membrane. The catalysed reaction is tRNA(Asp) + L-aspartate + ATP = L-aspartyl-tRNA(Asp) + AMP + diphosphate. In terms of biological role, catalyzes the attachment of aspartate to tRNA(Asp) in a two-step reaction: aspartate is first activated by ATP to form Asp-AMP and then transferred to the acceptor end of tRNA(Asp). The protein is Aspartate--tRNA ligase, mitochondrial (Dars2) of Rattus norvegicus (Rat).